The chain runs to 432 residues: Transcriptional adapter 3 (432 aa).

Residue lysine 21 forms a Glycyl lysine isopeptide (Lys-Gly) (interchain with G-Cter in SUMO2) linkage. Positions isoleucine 40–glutamine 69 form a coiled coil. Positions glycine 87 to glutamine 127 are disordered. Lysine 129 participates in a covalent cross-link: Glycyl lysine isopeptide (Lys-Gly) (interchain with G-Cter in SUMO2). Basic and acidic residues-rich tracts occupy residues aspartate 211–lysine 223 and leucine 232–proline 251. 2 disordered regions span residues aspartate 211–phenylalanine 257 and glutamate 271–lysine 319. 2 positions are modified to phosphoserine: serine 280 and serine 298. Over residues alanine 295–proline 305 the composition is skewed to polar residues. A coiled-coil region spans residues leucine 367–threonine 407. Residue lysine 418 is modified to N6-acetyllysine.

It belongs to the NGG1 family. The PCAF complex is composed of a number of TBP-associated factors (TAFS), such as TAF5, TAF5L, TAF6, TAF6L, TAF9, TAF10 and TAF12, PCAF, and also PCAF-associated factors (PAFs), such as TADA2L/ADA2, TADA3L/ADA3 and SPT3. Interacts directly with TADA2L and PCAF and also with the high-risk HPV oncoprotein E6. Component of the STAGA transcription coactivator-HAT complex, at least composed of SUPT3H, GCN5L2, TAF5L, TAF6L, SUPT7L, TADA3L, TAD1L, TAF10, TAF12, TRRAP and TAF9. Component of the TFTC-HAT complex. Component of the ADA2A-containing complex (ATAC), composed of KAT14, KAT2A, TADA2L, TADA3L, ZZ3, MBIP, WDR5, YEATS2, CCDC101 and DR1.

The protein localises to the nucleus. Its function is as follows. Functions as a component of the PCAF complex. The PCAF complex is capable of efficiently acetylating histones in a nucleosomal context. The PCAF complex could be considered as the human version of the yeast SAGA complex. Also known as a coactivator for p53/TP53-dependent transcriptional activation. Component of the ATAC complex, a complex with histone acetyltransferase activity on histones H3 and H4. The chain is Transcriptional adapter 3 (TADA3) from Pongo abelii (Sumatran orangutan).